Reading from the N-terminus, the 329-residue chain is MPLIPEEPLLASSPDRFCMFPIQYPQIWEMYKKALASFWTAEEVDLSSDTRHWETLTPGERHFITHVLAFFAASDGIVLENLAGRFMKEVQVAEARAFYGFQIAIENIHSEMYSLLLESYIKDSDEKSRLFRAVETNPCVEKKAKWALRWIDGSETFAERLVAFACVEGIFFSGSFCAIFWLKKRGLMPGLTFSNELISRDEGLHCDFACLLYSLLRTKLTEERVKGIVADAVEIEREFVCDALPCALVGMNGDLMSKYIEFVADRLLDALGYDKLYNAQNPFDWMELISLQGKTNFFEKRVGEYQKASVMSSLNGNGATHEFKLDEDF.

Residues D75, E106, and H109 each coordinate Fe cation. Y113 is a catalytic residue. 3 residues coordinate Fe cation: E168, E202, and H205.

It belongs to the ribonucleoside diphosphate reductase small chain family. Heterodimer of a large and a small chain. Requires Fe cation as cofactor.

It localises to the cytoplasm. The enzyme catalyses a 2'-deoxyribonucleoside 5'-diphosphate + [thioredoxin]-disulfide + H2O = a ribonucleoside 5'-diphosphate + [thioredoxin]-dithiol. Functionally, provides the precursors necessary for DNA synthesis. Catalyzes the biosynthesis of deoxyribonucleotides from the corresponding ribonucleotides. The polypeptide is Ribonucleoside-diphosphate reductase small chain (Nicotiana tabacum (Common tobacco)).